Here is a 1641-residue protein sequence, read N- to C-terminus: Alpha-2-macroglobulin (1641 aa).

Positions Met1–Gly31 are cleaved as a signal peptide. Residue Cys32 is the site of N-palmitoyl cysteine attachment. Residue Cys32 is the site of S-diacylglycerol cysteine attachment. Positions Cys1166 to Gln1169 form a cross-link, isoglutamyl cysteine thioester (Cys-Gln).

Belongs to the protease inhibitor I39 (alpha-2-macroglobulin) family. Bacterial alpha-2-macroglobulin subfamily.

Its subcellular location is the cell membrane. In terms of biological role, protects the bacterial cell from host peptidases. This is Alpha-2-macroglobulin from Xylella fastidiosa (strain 9a5c).